A 952-amino-acid chain; its full sequence is Protein translocase subunit SecA (952 aa).

ATP is bound by residues Gln135, 153–157 (GEGKT), and Asp575. Low complexity predominate over residues 907–921 (AAPAAAIPGVSAKAA). The disordered stretch occupies residues 907–946 (AAPAAAIPGVSAKAATQSTTPAAKEIGRNDPCPCGSGKKY). Residues Cys938, Cys940, Cys949, and Cys950 each coordinate Zn(2+).

It belongs to the SecA family. In terms of assembly, monomer and homodimer. Part of the essential Sec protein translocation apparatus which comprises SecA, SecYEG and auxiliary proteins SecDF. Other proteins may also be involved. The cofactor is Zn(2+).

It is found in the cell membrane. It localises to the cytoplasm. It carries out the reaction ATP + H2O + cellular proteinSide 1 = ADP + phosphate + cellular proteinSide 2.. Its function is as follows. Part of the Sec protein translocase complex. Interacts with the SecYEG preprotein conducting channel. Has a central role in coupling the hydrolysis of ATP to the transfer of proteins into and across the cell membrane, serving as an ATP-driven molecular motor driving the stepwise translocation of polypeptide chains across the membrane. The sequence is that of Protein translocase subunit SecA from Dehalococcoides mccartyi (strain CBDB1).